The following is a 156-amino-acid chain: Ecotin (156 aa).

An N-terminal signal peptide occupies residues M1 to A19. A disulfide bridge links C65 with C102.

Belongs to the protease inhibitor I11 (ecotin) family. Homodimer.

It localises to the periplasm. Functionally, general inhibitor of family S1 serine proteases. This Pseudomonas aeruginosa (strain LESB58) protein is Ecotin.